A 153-amino-acid chain; its full sequence is General odorant-binding protein lush (153 aa).

The N-terminal stretch at 1-29 (MKHWKRRSSAVFAIVLQVLVLLLPDPAVA) is a signal peptide. 3 disulfides stabilise this stretch: C46–C79, C75–C132, and C121–C141. S81 and T86 together coordinate 1-propanol. Positions 81 and 86 each coordinate butan-1-ol. S81 and T86 together coordinate ethanol.

The protein belongs to the PBP/GOBP family. As to expression, specifically expressed in chemosensory system in both males and females. Expressed in a subset of trichoid chemosensory sensilla located on the ventral-lateral surface of the third antennal segment. Secreted from non-neuronal support cells into the sensillum lymph that bathes the olfactory neurons within these sensilla.

Its subcellular location is the secreted. Its function is as follows. Odorant-binding protein required for olfactory behavior and for activity of pheromone-sensitive neurons. Binds to alcohols and mediates avoidance behavior to high concentrations of alcohols, the alcohol-binding possibly resulting in activation of receptors on T2B neurons, the activation of these receptors inhibiting these neurons. Acts in concert with Snmp and lush to capture cVA molecules on the surface of Or67d expressing olfactory dendrites and facilitate their transfer to the odorant-receptor Orco complex. Required for cVA response, probably by binding to VA. May act by serving as an adapter that bridges the presence of gaseous pheromone molecules, cVA, to activation of specific neuronal receptors expressed on T1 olfactory neurons, possibly via a specific conformational change induced by cVA that in turn activates T1 receptors. T1 neurons are excited by the pheromone VA, while T2 neurons are inhibited by alcohols. Also binds to phthalates. This chain is General odorant-binding protein lush (lush), found in Drosophila melanogaster (Fruit fly).